Reading from the N-terminus, the 559-residue chain is Dihydroxy-acid dehydratase (559 aa).

Cysteine 49 provides a ligand contact to [2Fe-2S] cluster. Aspartate 81 is a Mg(2+) binding site. Residue cysteine 122 participates in [2Fe-2S] cluster binding. Aspartate 123 and lysine 124 together coordinate Mg(2+). Lysine 124 is modified (N6-carboxylysine). Residue cysteine 194 coordinates [2Fe-2S] cluster. A Mg(2+)-binding site is contributed by glutamate 446. The active-site Proton acceptor is the serine 472.

This sequence belongs to the IlvD/Edd family. In terms of assembly, homodimer. The cofactor is [2Fe-2S] cluster. Mg(2+) serves as cofactor.

The catalysed reaction is (2R)-2,3-dihydroxy-3-methylbutanoate = 3-methyl-2-oxobutanoate + H2O. The enzyme catalyses (2R,3R)-2,3-dihydroxy-3-methylpentanoate = (S)-3-methyl-2-oxopentanoate + H2O. Its pathway is amino-acid biosynthesis; L-isoleucine biosynthesis; L-isoleucine from 2-oxobutanoate: step 3/4. The protein operates within amino-acid biosynthesis; L-valine biosynthesis; L-valine from pyruvate: step 3/4. Functionally, functions in the biosynthesis of branched-chain amino acids. Catalyzes the dehydration of (2R,3R)-2,3-dihydroxy-3-methylpentanoate (2,3-dihydroxy-3-methylvalerate) into 2-oxo-3-methylpentanoate (2-oxo-3-methylvalerate) and of (2R)-2,3-dihydroxy-3-methylbutanoate (2,3-dihydroxyisovalerate) into 2-oxo-3-methylbutanoate (2-oxoisovalerate), the penultimate precursor to L-isoleucine and L-valine, respectively. The polypeptide is Dihydroxy-acid dehydratase (Prochlorococcus marinus (strain MIT 9515)).